Here is a 140-residue protein sequence, read N- to C-terminus: Relaxin-3 (140 aa).

Residues 1–23 form the signal peptide; sequence MATRGLLLASWALLGALVLQAEA. Intrachain disulfides connect Cys33–Cys127, Cys45–Cys140, and Cys126–Cys131. Residues 53–116 constitute a propeptide, connecting peptide; that stretch reads ADILAHDPLG…GSPGVVRGSR (64 aa).

It belongs to the insulin family. As to quaternary structure, heterodimer of a B chain and an A chain linked by two disulfide bonds. In terms of tissue distribution, highly abundant expression is detected in neurons within the ventomedial dorsal tegmental nucleus and the laterally central gray alpha of the pons. Also detected at much lower levels within the hippocampus.

The protein localises to the secreted. In terms of biological role, may play a role in neuropeptide signaling processes. Ligand for LGR7, relaxin-3 receptor-1 and relaxin-3 receptor-2. This is Relaxin-3 (Rln3) from Rattus norvegicus (Rat).